A 526-amino-acid chain; its full sequence is Peptide chain release factor 3 (526 aa).

Positions 11–277 (SKRRTFAIIS…SLIKWAPSPL (267 aa)) constitute a tr-type G domain. GTP-binding positions include 20 to 27 (SHPDAGKT), 88 to 92 (DTPGH), and 142 to 145 (NKLD).

This sequence belongs to the TRAFAC class translation factor GTPase superfamily. Classic translation factor GTPase family. PrfC subfamily.

The protein localises to the cytoplasm. In terms of biological role, increases the formation of ribosomal termination complexes and stimulates activities of RF-1 and RF-2. It binds guanine nucleotides and has strong preference for UGA stop codons. It may interact directly with the ribosome. The stimulation of RF-1 and RF-2 is significantly reduced by GTP and GDP, but not by GMP. The chain is Peptide chain release factor 3 from Buchnera aphidicola subsp. Acyrthosiphon pisum (strain Tuc7).